We begin with the raw amino-acid sequence, 206 residues long: Ribonuclease HII (206 aa).

Residues 27-206 (ARIAGVDEAG…CALHRRSFKH (180 aa)) form the RNase H type-2 domain. 3 residues coordinate a divalent metal cation: D33, E34, and D125.

It belongs to the RNase HII family. Mn(2+) serves as cofactor. It depends on Mg(2+) as a cofactor.

The protein resides in the cytoplasm. The catalysed reaction is Endonucleolytic cleavage to 5'-phosphomonoester.. Its function is as follows. Endonuclease that specifically degrades the RNA of RNA-DNA hybrids. This is Ribonuclease HII from Moorella thermoacetica (strain ATCC 39073 / JCM 9320).